The sequence spans 1323 residues: MLDVNFFDELRIGLATADDIRRWSRGEVKKPETINYRTLKPEKDGLFCERIFGPTRDWECSCGKYKRVRYKGIICERCGVEVTKSKVRRERMGHIELAAPVTHIWYFKGVPSRLGYLLDLAPKDLEKIIYFAANIITSVDEDARHSDQTTLEAEMLLEKKEVEQDRDADLADRAKTLEEDLAELEAAGAKADAKKKVQNAADREMRHIRERAEREVERLDEIWNTFVKLAPKQMIADETLYEELLDRYEDYFTGGMGAEAIQTLIRNFDLEAEAESLREVIRDGKGQRKLRALKRLKVVAAFLRSGNDPAGMVLDCIPVIPPELRPMVQLDGGRFATSDLNDLYRRVINRNNRLKRMLDLGAPEIIVNNEKRMLQESVDALFDNGRRGRPVTGPGNRPLKSLSDLLKGKQGRFRQNLLGKRVDYSGRSVIIVGPQLKLHQCGLPKLMALELFKPFVMKRLVEKSYAQNIKSAKRMVERQRPEVWDVLEEAIAEHPVMLNRAPTLHRLGIQAFEPVLIEGKAIQLHPLACEAFNADFDGDQMAVHLPLSDEAQAEARILMLASNNILSPASGKPLAMPRLDMVTGLYYLTLIKGKEEFGGQGAFTEATEQGPATGVYTSLAEAIMAYDRGVLGLQAPIHVRIDHLRPPAEVEAEQFPDGWQKGQTWTAETTLGRVQFNELLPWNYPYVEGVMDKKNQAVVINDLAAKYPMITVAQTVDKLKDAGFYWATRSGVTITMHDVLVLPNKQEILDEYEAKAQRIEKKLARGKINESERYQSLVDLWKEATDFVGESVEKLYPDDNPIPMIVKSGAAGNMRQIWTLAGMKGMVTNSRGDYITRPVKTSFREGLSVLEYFNNSHGSRKGLADTALRTADSGYLTRRLVDVAQDVIVREDDCGTKQGVVLDVCTPVLDANGEKTGEFARADFVETSVLGRFLAADAIGANGEVVCEAGTVIGELELAELVKAGVETIKARSVMTCGTATGVCSTCYGKSMATGKKVEIGEAVGIVAAQSIGEPGTQLTMRTFHLGGVGGDITGGLPRVQELFEARVPKAKSPIASVDGKIKIEDDDAFFTLTIIPDDGSEEVVYEKLSKRQGLATLGTGGVERPLRDGDHVKMGQQLLKGAADPHEVLRVMGRRGVQQHLINEVQKVYRDQGVAIHDKHIEIIVRQMLRRVTVIDSGSTEYLPGSLVDHSDAVAASKEAVKTGGRPVEVRAEIMGITKASLATESWLSAASFQETTRVLTDAAINKRSDKLIGLKENVIIGKLIPAGTGIARYRNIQVQPTEEARAAAFTLPSTFGDGFYGDEGYGEFTGASVPLDDLGLH.

Zn(2+) is bound by residues Cys60, Cys62, Cys75, and Cys78. Mg(2+) is bound by residues Asp535, Asp537, and Asp539. Zn(2+) is bound by residues Cys894, Cys977, Cys984, and Cys987.

It belongs to the RNA polymerase beta' chain family. The RNAP catalytic core consists of 2 alpha, 1 beta, 1 beta' and 1 omega subunit. When a sigma factor is associated with the core the holoenzyme is formed, which can initiate transcription. It depends on Mg(2+) as a cofactor. Zn(2+) serves as cofactor.

The enzyme catalyses RNA(n) + a ribonucleoside 5'-triphosphate = RNA(n+1) + diphosphate. Functionally, DNA-dependent RNA polymerase catalyzes the transcription of DNA into RNA using the four ribonucleoside triphosphates as substrates. This is DNA-directed RNA polymerase subunit beta' from Corynebacterium urealyticum (strain ATCC 43042 / DSM 7109).